The following is a 104-amino-acid chain: Phosphoribosyl-ATP pyrophosphatase (104 aa).

Belongs to the PRA-PH family.

The protein localises to the cytoplasm. The enzyme catalyses 1-(5-phospho-beta-D-ribosyl)-ATP + H2O = 1-(5-phospho-beta-D-ribosyl)-5'-AMP + diphosphate + H(+). It participates in amino-acid biosynthesis; L-histidine biosynthesis; L-histidine from 5-phospho-alpha-D-ribose 1-diphosphate: step 2/9. The polypeptide is Phosphoribosyl-ATP pyrophosphatase (Streptococcus gordonii (strain Challis / ATCC 35105 / BCRC 15272 / CH1 / DL1 / V288)).